The sequence spans 337 residues: Tryptophan--tRNA ligase 2 (337 aa).

Residues 13–15 (QPT) and 22–23 (GN) each bind ATP. Positions 14 to 23 (PTAGSFHLGN) match the 'HIGH' region motif. L-tryptophan is bound at residue D139. ATP contacts are provided by residues 151–153 (GED), I190, and 199–203 (KMSKS). The short motif at 199 to 203 (KMSKS) is the 'KMSKS' region element.

This sequence belongs to the class-I aminoacyl-tRNA synthetase family. Homodimer.

The protein localises to the cytoplasm. It catalyses the reaction tRNA(Trp) + L-tryptophan + ATP = L-tryptophyl-tRNA(Trp) + AMP + diphosphate + H(+). Catalyzes the attachment of tryptophan to tRNA(Trp). The protein is Tryptophan--tRNA ligase 2 of Streptomyces avermitilis (strain ATCC 31267 / DSM 46492 / JCM 5070 / NBRC 14893 / NCIMB 12804 / NRRL 8165 / MA-4680).